The primary structure comprises 1403 residues: Envelopment polyprotein (1403 aa).

An N-terminal signal peptide occupies residues 1–17 (MLLNIVLISNLACLAFA). The Lumenal portion of the chain corresponds to 18–209 (LPLKEGTRGS…ELMIESFCTN (192 aa)). Residue Asn-40 is glycosylated (N-linked (GlcNAc...) asparagine; by host). A helical membrane pass occupies residues 210-230 (LELILLVTFILVGSVMMMILT). The Cytoplasmic segment spans residues 231 to 314 (KTYIVYVFIP…PKTRKLCKSK (84 aa)). A helical transmembrane segment spans residues 315 to 335 (ISNIVLCVITSLIFFSFITPI). Residues 336-361 (SSQCIDIEKLPDEYITCKRELANIKS) are Lumenal-facing. Residues 362–382 (LTIDDTYSFIYSCTCIIVLIL) form a helical membrane-spanning segment. Over 383–448 (LKKAAKYILY…FKFESSYNRT (66 aa)) the chain is Cytoplasmic. A helical membrane pass occupies residues 449–469 (GLIIFMLLLVPTIVMTQETSI). Residues 470-1361 (NCKNIQSTQL…GNLSFYWRLT (892 aa)) lie on the Lumenal side of the membrane. Cys-471 and Cys-487 form a disulfide bridge. The N-linked (GlcNAc...) asparagine; by host glycan is linked to Asn-493. 3 disulfides stabilise this stretch: Cys-523–Cys-550, Cys-580–Cys-589, and Cys-591–Cys-598. N-linked (GlcNAc...) asparagine; by host glycosylation is found at Asn-686 and Asn-1353. The helical transmembrane segment at 1362–1382 (IYIIISLIMLILFLYILIPLC) threads the bilayer. At 1383-1403 (KRLKGLLEYNERIYQMENKFK) the chain is on the cytoplasmic side.

The protein belongs to the nairovirus envelope glycoprotein family. In terms of assembly, heterodimer with glycoprotein C; in prefusion state. Heterodimer with glycoprotein N; in prefusion state. Homotrimeric; in postfusion state. Specific enzymatic cleavage by host MBTPS1/S1P/SKI-1 endopeptidase yield glycoprotein N. Specific enzymatic cleavages by host furin-like protease and MBTPS1/S1P endopeptidase yield GP38. In terms of processing, glycosylated.

Its subcellular location is the host endoplasmic reticulum membrane. The protein resides in the virion membrane. The protein localises to the host Golgi apparatus membrane. Glycoprotein C and glycoprotein N interact with each other and are present at the surface of the virion. Glycoprotein N probably locks the Gn-Gc complex in a prefusion state. Glycoprotein N and glycoprotein C are able to attach the virion to host cell receptors. This attachment induces virion internalization predominantly through clathrin-dependent endocytosis. Its function is as follows. Glycoprotein C and glycoprotein N interact with each other and are present at the surface of the virion. The spikes at the surface of the virion are formed by an N-terminal extension of glycoprotein C. Glycoprotein N and glycoprotein C are able to attach the virion to host cell receptors. This attachment induces virion internalization predominantly through clathrin-dependent endocytosis. Class II fusion protein that promotes fusion of viral membrane with host endosomal membrane after endocytosis of the virion. Exposure to potassium is necessary for the conformational change leading to fusion. The chain is Envelopment polyprotein (GP) from Bos taurus (Bovine).